We begin with the raw amino-acid sequence, 179 residues long: Inosine/xanthosine triphosphatase (179 aa).

8 to 13 (TTNPAK) is a substrate binding site. Asp-38 and Glu-68 together coordinate Mg(2+). Position 68–69 (68–69 (EA)) interacts with substrate.

It belongs to the YjjX NTPase family. Homodimer. The cofactor is Mg(2+). Mn(2+) serves as cofactor.

The enzyme catalyses XTP + H2O = XDP + phosphate + H(+). It catalyses the reaction ITP + H2O = IDP + phosphate + H(+). Its function is as follows. Phosphatase that hydrolyzes non-canonical purine nucleotides such as XTP and ITP to their respective diphosphate derivatives. Probably excludes non-canonical purines from DNA/RNA precursor pool, thus preventing their incorporation into DNA/RNA and avoiding chromosomal lesions. In Proteus mirabilis (strain HI4320), this protein is Inosine/xanthosine triphosphatase.